The sequence spans 154 residues: MKTFSAKPAEVTKKWVIIDATGLVVGRLATLVAMRLRGKHLPTYTPHVDCGDNVIIINASKVVLTGRKRDNKVYYHHTGFIGGIKERSAKAILEGRFPERVVEKAIERMIPRGPLGRVQMGNLRVYPGAEHPHEAQQPEKLDIGAMNRKNMRAA.

It belongs to the universal ribosomal protein uL13 family. In terms of assembly, part of the 50S ribosomal subunit.

This protein is one of the early assembly proteins of the 50S ribosomal subunit, although it is not seen to bind rRNA by itself. It is important during the early stages of 50S assembly. In Rhodopseudomonas palustris (strain ATCC BAA-98 / CGA009), this protein is Large ribosomal subunit protein uL13.